Consider the following 72-residue polypeptide: UPF0154 protein Bcer98_2334 (72 aa).

A helical membrane pass occupies residues 3–23 (IWSGILVGVVALLAGVALGFF).

Belongs to the UPF0154 family.

The protein localises to the cell membrane. In Bacillus cytotoxicus (strain DSM 22905 / CIP 110041 / 391-98 / NVH 391-98), this protein is UPF0154 protein Bcer98_2334.